The chain runs to 41 residues: Large ribosomal subunit protein bL36 (41 aa).

The protein belongs to the bacterial ribosomal protein bL36 family.

The chain is Large ribosomal subunit protein bL36 from Ruegeria pomeroyi (strain ATCC 700808 / DSM 15171 / DSS-3) (Silicibacter pomeroyi).